The following is a 1366-amino-acid chain: DNA-directed RNA polymerase subunit beta' (1366 aa).

Residues 1–40 (MTSTSPKSRRSSGKGRKGSKKKGKQVSQIPPLSKTPPSFR) form a disordered region. Residues 7-24 (KSRRSSGKGRKGSKKKGK) show a composition bias toward basic residues. Polar residues predominate over residues 25-38 (QVSQIPPLSKTPPS). Cys250, Cys317, Cys324, and Cys327 together coordinate Zn(2+). Positions 1299-1366 (TAAKSTSVLD…LQEEGLLADE (68 aa)) are disordered. Positions 1353 to 1366 (ALEGLQEEGLLADE) are enriched in low complexity.

Belongs to the RNA polymerase beta' chain family. RpoC2 subfamily. In cyanobacteria the RNAP catalytic core is composed of 2 alpha, 1 beta, 1 beta', 1 gamma and 1 omega subunit. When a sigma factor is associated with the core the holoenzyme is formed, which can initiate transcription. Zn(2+) is required as a cofactor.

The enzyme catalyses RNA(n) + a ribonucleoside 5'-triphosphate = RNA(n+1) + diphosphate. Its function is as follows. DNA-dependent RNA polymerase catalyzes the transcription of DNA into RNA using the four ribonucleoside triphosphates as substrates. The chain is DNA-directed RNA polymerase subunit beta' from Prochlorococcus marinus (strain MIT 9211).